Reading from the N-terminus, the 439-residue chain is Transcriptional enhancer factor TEF-5 (439 aa).

A compositionally biased stretch (polar residues) spans 1–12; the sequence is MASNSWTANSSP. Residues 1 to 34 form a disordered region; the sequence is MASNSWTANSSPGEAREDGSEGLDKGLDNDAEGV. Alanine 2 is modified (N-acetylalanine). Positions 14-28 are enriched in basic and acidic residues; it reads EAREDGSEGLDKGLD. The segment at residues 28-104 is a DNA-binding region (TEA); the sequence is DNDAEGVWSP…QVLARKKVRE (77 aa). The residue at position 148 (serine 148) is a Phosphoserine. Positions 173 to 439 are transcriptional activation; the sequence is GPSQDIKPFA…QHHVYKLVKD (267 aa).

As to quaternary structure, interacts with YAP1 and WWTR1/TAZ. Expressed in embryos as well as in many adult tissues.

It localises to the nucleus. Transcription factor which plays a key role in the Hippo signaling pathway, a pathway involved in organ size control and tumor suppression by restricting proliferation and promoting apoptosis. The core of this pathway is composed of a kinase cascade wherein MST1/MST2, in complex with its regulatory protein SAV1, phosphorylates and activates LATS1/2 in complex with its regulatory protein MOB1, which in turn phosphorylates and inactivates YAP1 oncoprotein and WWTR1/TAZ. Acts by mediating gene expression of YAP1 and WWTR1/TAZ, thereby regulating cell proliferation, migration and epithelial mesenchymal transition (EMT) induction. The chain is Transcriptional enhancer factor TEF-5 (Tead3) from Mus musculus (Mouse).